We begin with the raw amino-acid sequence, 304 residues long: Taste receptor type 2 member 4 (304 aa).

Residues 1-10 (MLWELYAFVF) lie on the Extracellular side of the membrane. The helical transmembrane segment at 11 to 31 (AASVVFNFVGIVANLFIIVII) threads the bilayer. At 32 to 46 (SKTWVKSHKISSSDK) the chain is on the cytoplasmic side. The helical transmembrane segment at 47 to 67 (ILFSLAITRFLTLGLFLLNTV) threads the bilayer. Residues 68–80 (YIATNTGRSVYFS) are Extracellular-facing. The chain crosses the membrane as a helical span at residues 81 to 101 (TFFLLCWKFLDSNSLWLVTFL). The Cytoplasmic segment spans residues 102-128 (NCLYCVKITHFQHPVFLLLKRTVSMKT). Residues 129–149 (TSLLLACLLISAFTTLLYFVL) traverse the membrane as a helical segment. Over 150-171 (TQISRFPEHIIGRNDTLFDVSD) the chain is Extracellular. Asn163 is a glycosylation site (N-linked (GlcNAc...) asparagine). The chain crosses the membrane as a helical span at residues 172-192 (GILTLAASLILSSLLQFLLNV). Residues 193–229 (TFASLLIHSLRRHVQKMQRNRSSFWNPQTEAHVGAMR) are Cytoplasmic-facing. The chain crosses the membrane as a helical span at residues 230–250 (LMICFLVLYIPYSIAALLYFP). The Extracellular segment spans residues 251-260 (SYMRKNLRAQ). Residues 261–281 (AACMIITAAYPPGHSILLIIT) form a helical membrane-spanning segment. At 282–304 (HHKLKAKAKKICCFYKLRDFVSN) the chain is on the cytoplasmic side.

It belongs to the G-protein coupled receptor T2R family. In terms of tissue distribution, expressed in tongue, stomach and duodenum.

The protein resides in the membrane. It is found in the cell projection. Its subcellular location is the cilium membrane. Gustducin-coupled receptor implicated in the perception of bitter compounds in the oral cavity and the gastrointestinal tract. Signals through PLCB2 and the calcium-regulated cation channel TRPM5. In airway epithelial cells, binding of denatonium increases the intracellular calcium ion concentration and stimulates ciliary beat frequency. The polypeptide is Taste receptor type 2 member 4 (Rattus norvegicus (Rat)).